We begin with the raw amino-acid sequence, 640 residues long: Chaperone protein DnaK (640 aa).

A Phosphothreonine; by autocatalysis modification is found at Thr196. The segment covering 547-569 (GDKIPSDKRPALEGALEKLKDAT) has biased composition (basic and acidic residues). Disordered regions lie at residues 547–575 (GDKIPSDKRPALEGALEKLKDATKNGTTE) and 595–640 (LYQA…GNGK). A compositionally biased stretch (polar residues) spans 603 to 615 (TNASEPTQNTDGS). A compositionally biased stretch (acidic residues) spans 625–634 (GEVENAEFEV).

It belongs to the heat shock protein 70 family.

Its function is as follows. Acts as a chaperone. This Chlorobium phaeobacteroides (strain DSM 266 / SMG 266 / 2430) protein is Chaperone protein DnaK.